Here is a 430-residue protein sequence, read N- to C-terminus: MDRIRIVGGNELNGIIPISGAKNAALPLMIASLLTSDTLTLENVPHLADVELLMRILGNHGVDVAVNGRRERQEDSYSRTIHFTCRTIVDTTASYELVSKMRASFWVIGPLLAREGHCRVSLPGGCAIGTRPVDLFIEGLTALGATMEIDAGYINAKAPNGGLIGARYTFPKVSVGATHVVMMAATLARGTTVIGNAAREPEVVDLANCLNAMGAKISGAGTATITIEGVTSLSGARHRVLPDRIETGTYAMAVAMAGGDVVLENTDVALLDTALETLRRAGADISATNNGMRVKRNGAGIKPVDIVTDPFPGFPTDLQAQFMALMTRSSGISHVTETIFENRFMHVQELARLGARITLSGQTAKIEGVQRLRGAPVMATDLRASVSLVIAGLAAEGETTVSRVYHLDRGFERLEEKLTRCGAVVERISE.

Position 22 to 23 (22 to 23) interacts with phosphoenolpyruvate; that stretch reads KN. Position 102 (Arg102) interacts with UDP-N-acetyl-alpha-D-glucosamine. Cys126 acts as the Proton donor in catalysis. Position 126 is a 2-(S-cysteinyl)pyruvic acid O-phosphothioketal (Cys126). UDP-N-acetyl-alpha-D-glucosamine contacts are provided by residues 131–135, 172–175, Asp317, and Ile339; these read RPVDL and KVSV.

This sequence belongs to the EPSP synthase family. MurA subfamily.

It localises to the cytoplasm. It carries out the reaction phosphoenolpyruvate + UDP-N-acetyl-alpha-D-glucosamine = UDP-N-acetyl-3-O-(1-carboxyvinyl)-alpha-D-glucosamine + phosphate. The protein operates within cell wall biogenesis; peptidoglycan biosynthesis. Cell wall formation. Adds enolpyruvyl to UDP-N-acetylglucosamine. The protein is UDP-N-acetylglucosamine 1-carboxyvinyltransferase of Rhizobium leguminosarum bv. trifolii (strain WSM2304).